A 462-amino-acid polypeptide reads, in one-letter code: Calcitonin gene-related peptide type 1 receptor (462 aa).

An N-terminal signal peptide occupies residues 1 to 22; that stretch reads MEKKFFLSFLFLLPFFMILVIA. Topologically, residues 23 to 140 are extracellular; it reads ESEEENPDDL…NTHEKVKTAL (118 aa). Cystine bridges form between Cys49/Cys75, Cys66/Cys106, and Cys89/Cys128. Asn67, Asn119, and Asn124 each carry an N-linked (GlcNAc...) asparagine glycan. The chain crosses the membrane as a helical span at residues 141–165; it reads NLFYLTIIGHVLSIASLLISLGIFF. Over 166-176 the chain is Cytoplasmic; that stretch reads YFKSLSCQRIT. Residues 177 to 199 traverse the membrane as a helical segment; it reads LHKNLFFSFVCNSVITIIHLTAV. At 200–210 the chain is on the extracellular side; the sequence is ANNQALVATNP. Residues 211–239 form a helical membrane-spanning segment; it reads VSCKVSQFIHLYLMGCNYFWMLCEGIYLH. Residues 240 to 253 are Cytoplasmic-facing; the sequence is TLVVVAVFAEKQHL. The helical transmembrane segment at 254 to 274 threads the bilayer; sequence MWYYFLGWGFPLIPACIHAVA. The Extracellular portion of the chain corresponds to 275-290; that stretch reads RRLYYNDNCWISSDTQ. Residues 289-290 form a required for RAMP3 interaction region; sequence TQ. Residues 291–315 traverse the membrane as a helical segment; sequence LLYIIHGPICAALLVNLFFLLNIVR. The Cytoplasmic portion of the chain corresponds to 316-330; sequence VLITKLKVTHQAESN. Residues 331 to 352 form a helical membrane-spanning segment; sequence LYMKAVRATLILVPLLGIEFVL. Residues 353 to 367 are Extracellular-facing; sequence IPWRPEGKIAEEIYD. Residues 368 to 388 traverse the membrane as a helical segment; it reads YIINILMHYQGLLVSTIFCFF. Topologically, residues 389–462 are cytoplasmic; sequence NGEVQAILRR…VVIKPEKLYD (74 aa). A phosphoserine mark is found at Ser421 and Ser446.

Belongs to the G-protein coupled receptor 2 family. In terms of assembly, heterodimer of CALCRL and RAMP1; the receptor complex functions as CGRP receptor. Heterodimer of CALCRL and RAMP2 or CALCRL and RAMP3; the complexes function as adrenomedullin receptor.

The protein localises to the cell membrane. G protein-coupled receptor which specificity is determined by its interaction with receptor-activity-modifying proteins (RAMPs). Together with RAMP1, form the receptor complex for calcitonin-gene-related peptides CALCA/CGRP1 and CALCB/CGRP2. Together with RAMP2 or RAMP3, function as receptor complexes for adrenomedullin (ADM and ADM2). Ligand binding causes a conformation change that triggers signaling via guanine nucleotide-binding proteins (G proteins) and modulates the activity of downstream effectors. Activates cAMP-dependent pathway. In Bos taurus (Bovine), this protein is Calcitonin gene-related peptide type 1 receptor (CALCRL).